The primary structure comprises 711 residues: Ribosomal RNA large subunit methyltransferase K/L (711 aa).

The THUMP domain maps to 43–154 (TLYRTLLWSR…RENLVISLDL (112 aa)).

This sequence belongs to the methyltransferase superfamily. RlmKL family.

Its subcellular location is the cytoplasm. It catalyses the reaction guanosine(2445) in 23S rRNA + S-adenosyl-L-methionine = N(2)-methylguanosine(2445) in 23S rRNA + S-adenosyl-L-homocysteine + H(+). It carries out the reaction guanosine(2069) in 23S rRNA + S-adenosyl-L-methionine = N(2)-methylguanosine(2069) in 23S rRNA + S-adenosyl-L-homocysteine + H(+). Its function is as follows. Specifically methylates the guanine in position 2445 (m2G2445) and the guanine in position 2069 (m7G2069) of 23S rRNA. The polypeptide is Ribosomal RNA large subunit methyltransferase K/L (Haemophilus influenzae (strain PittGG)).